The sequence spans 234 residues: Phosphoribosylaminoimidazole-succinocarboxamide synthase (234 aa).

Belongs to the SAICAR synthetase family.

The enzyme catalyses 5-amino-1-(5-phospho-D-ribosyl)imidazole-4-carboxylate + L-aspartate + ATP = (2S)-2-[5-amino-1-(5-phospho-beta-D-ribosyl)imidazole-4-carboxamido]succinate + ADP + phosphate + 2 H(+). Its pathway is purine metabolism; IMP biosynthesis via de novo pathway; 5-amino-1-(5-phospho-D-ribosyl)imidazole-4-carboxamide from 5-amino-1-(5-phospho-D-ribosyl)imidazole-4-carboxylate: step 1/2. The protein is Phosphoribosylaminoimidazole-succinocarboxamide synthase of Clostridium botulinum (strain ATCC 19397 / Type A).